The sequence spans 464 residues: ATP synthase subunit beta (464 aa).

Position 154–161 (154–161) interacts with ATP; sequence GGAGVGKT.

Belongs to the ATPase alpha/beta chains family. F-type ATPases have 2 components, CF(1) - the catalytic core - and CF(0) - the membrane proton channel. CF(1) has five subunits: alpha(3), beta(3), gamma(1), delta(1), epsilon(1). CF(0) has three main subunits: a(1), b(2) and c(9-12). The alpha and beta chains form an alternating ring which encloses part of the gamma chain. CF(1) is attached to CF(0) by a central stalk formed by the gamma and epsilon chains, while a peripheral stalk is formed by the delta and b chains.

Its subcellular location is the cell membrane. It catalyses the reaction ATP + H2O + 4 H(+)(in) = ADP + phosphate + 5 H(+)(out). Its function is as follows. Produces ATP from ADP in the presence of a proton gradient across the membrane. The catalytic sites are hosted primarily by the beta subunits. This Mycoplasmopsis synoviae (strain 53) (Mycoplasma synoviae) protein is ATP synthase subunit beta.